A 114-amino-acid chain; its full sequence is Transmembrane protein 256 homolog (114 aa).

The N-terminal stretch at 1 to 25 is a signal peptide; sequence MAAGRVWGRLGAVSGALAVTAGAYG. Over 26 to 64 the chain is Extracellular; the sequence is AHGFRRSDRDEYLKELFETGNRYHFLHSLALLAVPHCRR. A helical membrane pass occupies residues 65–85; it reads PLLAGSLLTSGIVLFSGTFYY. Over 86 to 93 the chain is Cytoplasmic; it reads QALSGDPT. A helical transmembrane segment spans residues 94 to 114; that stretch reads LTKAAPYGGTLLILGWAAMAL.

Belongs to the TMEM256 family.

It localises to the cell membrane. The sequence is that of Transmembrane protein 256 homolog from Bufo gargarizans (Asian toad).